Consider the following 1235-residue polypeptide: Major DNA-binding protein (1235 aa).

Residues 536-584 (GGLDGKGDDGVPGGGAGGGGGRDVSGGPSDGLGGGRGGGGGGDSGGMMG) are disordered. Positions 545-584 (GVPGGGAGGGGGRDVSGGPSDGLGGGRGGGGGGDSGGMMG) are enriched in gly residues. Residues 846-847 (FW) carry the Required for filament formation motif. The span at 1214–1226 (GVGGSSGGGGGSG) shows a compositional bias: gly residues. Residues 1214–1235 (GVGGSSGGGGGSGLLPAKRSRL) are disordered. Residues 1232–1235 (RSRL) form a required for nuclear localization region.

The protein belongs to the herpesviridae major DNA-binding protein family. As to quaternary structure, homooligomers. Forms double-helical filaments necessary for the formation of replication compartments within the host nucleus. Interacts with the origin-binding protein. Interacts with the helicase primase complex; this interaction stimulates primer synthesis activity of the helicase-primase complex. Interacts with the DNA polymerase. Interacts with the alkaline exonuclease; this interaction increases its nuclease processivity.

It localises to the host nucleus. In terms of biological role, plays several crucial roles in viral infection. Participates in the opening of the viral DNA origin to initiate replication by interacting with the origin-binding protein. May disrupt loops, hairpins and other secondary structures present on ssDNA to reduce and eliminate pausing of viral DNA polymerase at specific sites during elongation. Promotes viral DNA recombination by performing strand-transfer, characterized by the ability to transfer a DNA strand from a linear duplex to a complementary single-stranded DNA circle. Can also catalyze the renaturation of complementary single strands. Additionally, reorganizes the host cell nucleus, leading to the formation of prereplicative sites and replication compartments. This process is driven by the protein which can form double-helical filaments in the absence of DNA. This Homo sapiens (Human) protein is Major DNA-binding protein.